We begin with the raw amino-acid sequence, 372 residues long: Transcription factor MYB80 (372 aa).

HTH myb-type domains follow at residues Lys-9 to Leu-65 and Lys-66 to Leu-116. 2 DNA-binding regions (H-T-H motif) span residues Trp-37 to Leu-61 and Trp-89 to Leu-112. The span at Met-298–Thr-311 shows a compositional bias: polar residues. A disordered region spans residues Met-298–Ala-347. Positions Glu-312 to Asn-323 are enriched in basic and acidic residues.

Its subcellular location is the nucleus. In terms of biological role, essential for tapetum development in anthers and microsporogenesis. May regulate the timing of tapetal programmed cell death (PCD) which is critical for pollen development. This is Transcription factor MYB80 from Oryza sativa subsp. japonica (Rice).